We begin with the raw amino-acid sequence, 171 residues long: uncharacterized protein (171 aa).

It to M.jannaschii MJ0417.

This is an uncharacterized protein from Methanocaldococcus jannaschii (strain ATCC 43067 / DSM 2661 / JAL-1 / JCM 10045 / NBRC 100440) (Methanococcus jannaschii).